An 859-amino-acid chain; its full sequence is Probable potassium transporter 14 (859 aa).

Positions 1–19 (METRSGGSGSASGGGGGGR) are enriched in gly residues. The interval 1 to 69 (METRSGGSGS…SRGGCSDSDD (69 aa)) is disordered. At 1-112 (METRSGGSGS…RHQEITVGRS (112 aa)) the chain is on the cytoplasmic side. The segment covering 54–65 (PAAASGSRGGCS) has biased composition (low complexity). Residues 113–133 (IVLAVQTLGVVFGDVGTSPLY) form a helical membrane-spanning segment. Residues 134-155 (AFDVMFNKYPITSKEDVLGALS) are Extracellular-facing. The helical transmembrane segment at 156-176 (LVIYTLILIPLLKYTLIALWG) threads the bilayer. Residues 177–240 (NDDGEGGTFA…RLETSSMLKK (64 aa)) lie on the Cytoplasmic side of the membrane. The helical transmembrane segment at 241–261 (LLLMLVLFGTSMVIADGVVTP) threads the bilayer. Over 262-275 (AMSVMSAVNGLKVG) the chain is Extracellular. Residues 276–296 (ISSVNEGEVVMITVAVLIVLF) traverse the membrane as a helical segment. Residues 297–305 (TLQRFGSSK) lie on the Cytoplasmic side of the membrane. A helical transmembrane segment spans residues 306–326 (VALAVGPALFIWFCCLAGIGI). Over 327–359 (YNMKTYGSAVLQAFNPMYIYYYFERNPTQAWMS) the chain is Extracellular. Residues 360–380 (LGGCLLCATGSEAMFADLCYF) form a helical membrane-spanning segment. Over 381-388 (SVKSVQLT) the chain is Cytoplasmic. Residues 389 to 409 (FVFLVLPCLLLGYLGQAAFLM) traverse the membrane as a helical segment. Residues 410–417 (ENLTENQQ) are Extracellular-facing. Asn-411 is a glycosylation site (N-linked (GlcNAc...) asparagine). Residues 418 to 438 (VFFLSIPNQAFWPVVFIAILA) form a helical membrane-spanning segment. Residues 439–478 (AIIASRTMTTAIFSTIKQATALGCFPRLKIIHTSRSFMGQ) lie on the Cytoplasmic side of the membrane. Residues 479 to 499 (IYIPMMNWFLLVSCLAFVTMF) form a helical membrane-spanning segment. Topologically, residues 500-508 (GSINEIGNA) are extracellular. A helical transmembrane segment spans residues 509–531 (YGIAELGVMMMTTVLVTIIMLLI). Topologically, residues 532–535 (WQIN) are cytoplasmic. The chain crosses the membrane as a helical span at residues 536–558 (IIVVLCFLTLSLGLELIFFSSVL). Residues 559-560 (GS) are Extracellular-facing. A helical membrane pass occupies residues 561-581 (VADGSWVLLVFAAVLYLIMYI). Topologically, residues 582-859 (WNYGTKLKYE…MMQVAMQYMV (278 aa)) are cytoplasmic. The tract at residues 752–772 (GVPPAEAAGTTEHPTIGSSMS) is disordered. Positions 763-772 (EHPTIGSSMS) are enriched in polar residues.

This sequence belongs to the HAK/KUP transporter (TC 2.A.72.3) family.

The protein resides in the membrane. Its function is as follows. High-affinity potassium transporter. In Oryza sativa subsp. japonica (Rice), this protein is Probable potassium transporter 14 (HAK14).